The following is a 213-amino-acid chain: NADH dehydrogenase [ubiquinone] iron-sulfur protein 7, mitochondrial (213 aa).

Residues 1–38 (MAVLSAPGLRGFRILGLRSSVGPAVQARGVHQSVATDG) constitute a mitochondrion transit peptide. The interval 31–53 (HQSVATDGPSSTQPALPKARAVA) is disordered. Over residues 33–44 (SVATDGPSSTQP) the composition is skewed to polar residues. [4Fe-4S] cluster is bound by residues C88 and C89. R111 bears the Hydroxyarginine mark. Positions 153 and 183 each coordinate [4Fe-4S] cluster.

This sequence belongs to the complex I 20 kDa subunit family. Core subunit of respiratory chain NADH dehydrogenase (Complex I) which is composed of 45 different subunits. This is a component of the iron-sulfur (IP) fragment of the enzyme. The cofactor is [4Fe-4S] cluster. In terms of processing, hydroxylated at Arg-111 by NDUFAF5 early in the pathway of assembly of complex I, before the formation of the juncture between peripheral and membrane arms.

Its subcellular location is the mitochondrion inner membrane. It catalyses the reaction a ubiquinone + NADH + 5 H(+)(in) = a ubiquinol + NAD(+) + 4 H(+)(out). Functionally, core subunit of the mitochondrial membrane respiratory chain NADH dehydrogenase (Complex I) which catalyzes electron transfer from NADH through the respiratory chain, using ubiquinone as an electron acceptor. Essential for the catalytic activity of complex I. The sequence is that of NADH dehydrogenase [ubiquinone] iron-sulfur protein 7, mitochondrial (NDUFS7) from Homo sapiens (Human).